The sequence spans 593 residues: MGLRRTSWMHFSALCRRAPLSTAPAAREQPAAGPGAEPVCGPAETARPPVPAVDFGNTQEAYRSRRSWELARSLLVLSLCASPALLARHEQLLHLARKLLGQRLFNTLMKMTFYGQFVAGEDQESIRPLIQHNRAFGVGSILDYGVEEDLTPEEAERTEMESCSSALERDGCGVSKREKQFQAHRAFGDRRDGVTSARTYFYASEAKCDSHMETFLHCIEASGGASEDGFSAIKLTALGRPQFLLQFSDMLTKWRRFFHHVAAEQGKAGLAAVDTKLEVAALQESVVKMGIASRAEIEDWFTAETLGVSGTLDLLDWCSLIDSRTELSRHLVVPNMQTGRLEPLLSQFTEEEERQMTRMLQRMDVLAKKANQVGVRLMVDAEQTYFQPAISRLTLEMQRRFNVERPLIFNTFQCYLRDAYDNVILDVELARREGWCFGAKLVRGAYMAQVGYEDPINPTYEATSAVYHRCLDYVLEELKHNARAAVMVASHNEDTVRFTLRRMEELGLHPADRQVYFGQLLGMCDHISFPLGQAGFPVYKYVPYGPVMEVLPYLSRRALENSGVMKGAQRERQLLWQELKRRLCTRSLFHQPA.

Residues 24–44 are disordered; sequence PAAREQPAAGPGAEPVCGPAE. N6-acetyllysine occurs at positions 368 and 479.

The protein belongs to the proline oxidase family. Requires FAD as cofactor.

Its subcellular location is the mitochondrion matrix. The enzyme catalyses L-proline + a quinone = (S)-1-pyrroline-5-carboxylate + a quinol + H(+). It functions in the pathway amino-acid degradation; L-proline degradation into L-glutamate; L-glutamate from L-proline: step 1/2. Functionally, converts proline to delta-1-pyrroline-5-carboxylate. The sequence is that of Proline dehydrogenase 1, mitochondrial from Bos taurus (Bovine).